The sequence spans 538 residues: Phosphoenolpyruvate carboxykinase (ATP) (538 aa).

Substrate-binding residues include arginine 61, tyrosine 195, and lysine 201. ATP contacts are provided by residues lysine 201, histidine 220, and 236–244; that span reads GLSGTGKTT. Residues lysine 201 and histidine 220 each coordinate Mn(2+). Aspartate 257 contacts Mn(2+). 3 residues coordinate ATP: glutamate 285, arginine 323, and threonine 449. Arginine 323 serves as a coordination point for substrate.

The protein belongs to the phosphoenolpyruvate carboxykinase (ATP) family. The cofactor is Mn(2+).

The protein localises to the cytoplasm. The enzyme catalyses oxaloacetate + ATP = phosphoenolpyruvate + ADP + CO2. It participates in carbohydrate biosynthesis; gluconeogenesis. Its function is as follows. Involved in the gluconeogenesis. Catalyzes the conversion of oxaloacetate (OAA) to phosphoenolpyruvate (PEP) through direct phosphoryl transfer between the nucleoside triphosphate and OAA. This is Phosphoenolpyruvate carboxykinase (ATP) from Bradyrhizobium diazoefficiens (strain JCM 10833 / BCRC 13528 / IAM 13628 / NBRC 14792 / USDA 110).